The primary structure comprises 388 residues: Chorismate synthase (388 aa).

NADP(+) is bound by residues R39 and R45. FMN contacts are provided by residues 130 to 132 (RSS), 251 to 252 (NA), A296, 311 to 315 (KPIPT), and R337.

This sequence belongs to the chorismate synthase family. In terms of assembly, homotetramer. FMNH2 is required as a cofactor.

It catalyses the reaction 5-O-(1-carboxyvinyl)-3-phosphoshikimate = chorismate + phosphate. It functions in the pathway metabolic intermediate biosynthesis; chorismate biosynthesis; chorismate from D-erythrose 4-phosphate and phosphoenolpyruvate: step 7/7. Its function is as follows. Catalyzes the anti-1,4-elimination of the C-3 phosphate and the C-6 proR hydrogen from 5-enolpyruvylshikimate-3-phosphate (EPSP) to yield chorismate, which is the branch point compound that serves as the starting substrate for the three terminal pathways of aromatic amino acid biosynthesis. This reaction introduces a second double bond into the aromatic ring system. The protein is Chorismate synthase of Streptococcus equi subsp. equi (strain 4047).